A 470-amino-acid polypeptide reads, in one-letter code: Cysteine--tRNA ligase (470 aa).

Cysteine 29 is a binding site for Zn(2+). A 'HIGH' region motif is present at residues 31-41 (PTVYNYAHIGN). Residues cysteine 211, histidine 236, and glutamate 240 each contribute to the Zn(2+) site. Positions 273–277 (KMSKS) match the 'KMSKS' region motif. Lysine 276 provides a ligand contact to ATP.

It belongs to the class-I aminoacyl-tRNA synthetase family. In terms of assembly, monomer. Zn(2+) is required as a cofactor.

The protein resides in the cytoplasm. The enzyme catalyses tRNA(Cys) + L-cysteine + ATP = L-cysteinyl-tRNA(Cys) + AMP + diphosphate. The protein is Cysteine--tRNA ligase of Phenylobacterium zucineum (strain HLK1).